Reading from the N-terminus, the 252-residue chain is Chitooligosaccharide deacetylase (252 aa).

His61 and His125 together coordinate Mg(2+).

Belongs to the YdjC deacetylase family. ChbG subfamily. In terms of assembly, homodimer. Requires Mg(2+) as cofactor.

Its subcellular location is the cytoplasm. It carries out the reaction N,N'-diacetylchitobiose + H2O = N-acetyl-beta-D-glucosaminyl-(1-&gt;4)-D-glucosamine + acetate. The catalysed reaction is diacetylchitobiose-6'-phosphate + H2O = N'-monoacetylchitobiose-6'-phosphate + acetate. The protein operates within glycan degradation; chitin degradation. Its function is as follows. Involved in the degradation of chitin. ChbG is essential for growth on the acetylated chitooligosaccharides chitobiose and chitotriose but is dispensable for growth on cellobiose and chitosan dimer, the deacetylated form of chitobiose. Deacetylation of chitobiose-6-P and chitotriose-6-P is necessary for both the activation of the chb promoter by the regulatory protein ChbR and the hydrolysis of phosphorylated beta-glucosides by the phospho-beta-glucosidase ChbF. Catalyzes the removal of only one acetyl group from chitobiose-6-P to yield monoacetylchitobiose-6-P, the inducer of ChbR and the substrate of ChbF. The chain is Chitooligosaccharide deacetylase from Salmonella schwarzengrund (strain CVM19633).